Here is a 149-residue protein sequence, read N- to C-terminus: Cell division protein SepF (149 aa).

Belongs to the SepF family. In terms of assembly, homodimer. Interacts with FtsZ.

The protein resides in the cytoplasm. In terms of biological role, cell division protein that is part of the divisome complex and is recruited early to the Z-ring. Probably stimulates Z-ring formation, perhaps through the cross-linking of FtsZ protofilaments. Its function overlaps with FtsA. This chain is Cell division protein SepF, found in Clostridium perfringens (strain ATCC 13124 / DSM 756 / JCM 1290 / NCIMB 6125 / NCTC 8237 / Type A).